The sequence spans 127 residues: Large ribosomal subunit protein eL8 (127 aa).

It belongs to the eukaryotic ribosomal protein eL8 family. In terms of assembly, part of the 50S ribosomal subunit. Probably part of the RNase P complex.

Its subcellular location is the cytoplasm. Its function is as follows. Multifunctional RNA-binding protein that recognizes the K-turn motif in ribosomal RNA, the RNA component of RNase P, box H/ACA, box C/D and box C'/D' sRNAs. The chain is Large ribosomal subunit protein eL8 from Saccharolobus islandicus (strain Y.N.15.51 / Yellowstone #2) (Sulfolobus islandicus).